The following is a 278-amino-acid chain: Phosphatidylglycerol--prolipoprotein diacylglyceryl transferase (278 aa).

3 consecutive transmembrane segments (helical) span residues 21–41, 54–74, and 88–108; these read WYGIIIAAGILLGYFIAQASV, IIFWSAIFGFIVARIYFVIFQ, and IWHGGIAIHGGLIGGFVTGII. Arg136 provides a ligand contact to a 1,2-diacyl-sn-glycero-3-phospho-(1'-sn-glycerol). Transmembrane regions (helical) follow at residues 176–196 and 234–254; these read QPTFLYESLWDILGFVILILL and IRVAQLMSIILILIGVIIMII.

It belongs to the Lgt family.

It is found in the cell membrane. It carries out the reaction L-cysteinyl-[prolipoprotein] + a 1,2-diacyl-sn-glycero-3-phospho-(1'-sn-glycerol) = an S-1,2-diacyl-sn-glyceryl-L-cysteinyl-[prolipoprotein] + sn-glycerol 1-phosphate + H(+). It functions in the pathway protein modification; lipoprotein biosynthesis (diacylglyceryl transfer). Catalyzes the transfer of the diacylglyceryl group from phosphatidylglycerol to the sulfhydryl group of the N-terminal cysteine of a prolipoprotein, the first step in the formation of mature lipoproteins. This Staphylococcus xylosus protein is Phosphatidylglycerol--prolipoprotein diacylglyceryl transferase.